Here is a 238-residue protein sequence, read N- to C-terminus: Ribonuclease PH (238 aa).

Phosphate is bound by residues arginine 86 and 124-126 (GTR).

This sequence belongs to the RNase PH family. As to quaternary structure, homohexameric ring arranged as a trimer of dimers.

It carries out the reaction tRNA(n+1) + phosphate = tRNA(n) + a ribonucleoside 5'-diphosphate. In terms of biological role, phosphorolytic 3'-5' exoribonuclease that plays an important role in tRNA 3'-end maturation. Removes nucleotide residues following the 3'-CCA terminus of tRNAs; can also add nucleotides to the ends of RNA molecules by using nucleoside diphosphates as substrates, but this may not be physiologically important. Probably plays a role in initiation of 16S rRNA degradation (leading to ribosome degradation) during starvation. The chain is Ribonuclease PH from Salmonella gallinarum (strain 287/91 / NCTC 13346).